A 262-amino-acid chain; its full sequence is Short-chain Z-isoprenyl diphosphate synthase (262 aa).

Residue aspartate 40 is part of the active site. Mg(2+) is bound at residue aspartate 40. Substrate-binding positions include 41–44, tryptophan 45, and 86–88; these read GNRR and STE. Asparagine 89 acts as the Proton acceptor in catalysis. Residues arginine 92, arginine 211, and 217–219 contribute to the substrate site; that span reads RLS. Glutamate 230 contributes to the Mg(2+) binding site.

Belongs to the UPP synthase family. Z-FPP synthase subfamily. Requires Mg(2+) as cofactor.

It carries out the reaction isopentenyl diphosphate + (2E)-geranyl diphosphate = (2Z,6E)-farnesyl diphosphate + diphosphate. It participates in phospholipid metabolism; decaprenyl phosphate biosynthesis. Its function is as follows. Generates Z-farnesyl diphosphate (Z-FPP) from isopentenyl pyrophosphate (IPP). Z-FPP is the precursor of decaprenyl diphosphate, which has a central role in the biosynthesis of the mycobacterial cell wall. The polypeptide is Short-chain Z-isoprenyl diphosphate synthase (Mycobacterium leprae (strain TN)).